We begin with the raw amino-acid sequence, 692 residues long: NADH-ubiquinone oxidoreductase chain 5 (692 aa).

A run of 17 helical transmembrane segments spans residues I5–V23, I30–F52, L81–Y103, R112–T129, Y133–F155, F168–G190, L200–A222, V243–R262, T272–F294, I301–L319, L329–V351, S364–M386, N409–L431, I452–L471, L511–Y528, V535–V557, and Y615–F637.

Belongs to the complex I subunit 5 family.

The protein resides in the mitochondrion inner membrane. It catalyses the reaction a ubiquinone + NADH + 5 H(+)(in) = a ubiquinol + NAD(+) + 4 H(+)(out). Functionally, core subunit of the mitochondrial membrane respiratory chain NADH dehydrogenase (Complex I) that is believed to belong to the minimal assembly required for catalysis. Complex I functions in the transfer of electrons from NADH to the respiratory chain. The immediate electron acceptor for the enzyme is believed to be ubiquinone. This Hypocrea jecorina (Trichoderma reesei) protein is NADH-ubiquinone oxidoreductase chain 5 (nd5).